Here is a 130-residue protein sequence, read N- to C-terminus: Small ribosomal subunit protein uS8 (130 aa).

Belongs to the universal ribosomal protein uS8 family. In terms of assembly, part of the 30S ribosomal subunit.

One of the primary rRNA binding proteins, it binds directly to 16S rRNA central domain where it helps coordinate assembly of the platform of the 30S subunit. This chain is Small ribosomal subunit protein uS8, found in Methanothermobacter thermautotrophicus (strain ATCC 29096 / DSM 1053 / JCM 10044 / NBRC 100330 / Delta H) (Methanobacterium thermoautotrophicum).